The chain runs to 1347 residues: DExH-box ATP-dependent RNA helicase DExH11 (1347 aa).

The segment at 263–291 (ELEGDDHTAGSESPKAEAEPDAKASISNE) is disordered. Positions 267–284 (DDHTAGSESPKAEAEPDA) are enriched in basic and acidic residues. In terms of domain architecture, Helicase ATP-binding spans 369 to 524 (ICCLEKGESV…WIGRTKQKEI (156 aa)). Residue 382–389 (AHTSAGKT) participates in ATP binding. The DEVH box signature appears at 472 to 475 (DEVH). Residues 566–625 (SQKKKNSNAVSVAPKQQMGSSAHQDGSKSQKHEAHSRGKQNKHSSVKDVGKSSYSGNSQN) are disordered. Residues 590–601 (DGSKSQKHEAHS) show a composition bias toward basic and acidic residues. Residues 673–838 (DLTSSSEKSE…LTYIMILHLL (166 aa)) enclose the Helicase C-terminal domain.

This sequence belongs to the DExH box helicase family. SKI2 subfamily. In terms of assembly, component of the cytoplasmic SKI complex, which consists of SKI2, SKI3 and VIP3/SKI8. In terms of tissue distribution, expressed in vascular tissues of leaves and roots of young plants.

The protein localises to the cytoplasm. The catalysed reaction is ATP + H2O = ADP + phosphate + H(+). In terms of biological role, component of the SKI complex which is thought to be involved in exosome-mediated RNA decay and associates with transcriptionally active genes in a manner dependent on PAF1 complex (PAF1C). Involved in the regulation of potassium deprivation stress response. The protein is DExH-box ATP-dependent RNA helicase DExH11 of Arabidopsis thaliana (Mouse-ear cress).